The primary structure comprises 247 residues: Adenosylcobinamide-GDP ribazoletransferase (247 aa).

The next 6 helical transmembrane spans lie at 34 to 54 (IVMF…IFIL), 59 to 79 (CGIP…TGGF), 113 to 133 (GGLA…ELAL), 138 to 158 (MLAA…LLMY), 171 to 191 (VFIG…AVIV), and 194 to 214 (VLLP…AIFI).

This sequence belongs to the CobS family. Requires Mg(2+) as cofactor.

It is found in the cell inner membrane. It carries out the reaction alpha-ribazole + adenosylcob(III)inamide-GDP = adenosylcob(III)alamin + GMP + H(+). The catalysed reaction is alpha-ribazole 5'-phosphate + adenosylcob(III)inamide-GDP = adenosylcob(III)alamin 5'-phosphate + GMP + H(+). It participates in cofactor biosynthesis; adenosylcobalamin biosynthesis; adenosylcobalamin from cob(II)yrinate a,c-diamide: step 7/7. Joins adenosylcobinamide-GDP and alpha-ribazole to generate adenosylcobalamin (Ado-cobalamin). Also synthesizes adenosylcobalamin 5'-phosphate from adenosylcobinamide-GDP and alpha-ribazole 5'-phosphate. This chain is Adenosylcobinamide-GDP ribazoletransferase, found in Salmonella paratyphi A (strain ATCC 9150 / SARB42).